Reading from the N-terminus, the 209-residue chain is MLRFEDWELAVVIILTRFMEAIAIIISIYLAFNGYKLRYVLATAGVFLLSVLINLTGLIFRPYFIYFSLASIFLSALILTALILYVKKNPEKTKSFSLPENARCPVCNVLILKEDELCTAKIGNYTYYFDTCHHLVQLLKEPDYFVERGNIFKGELKEVFVKTKDTKKWKKFSEVKLVGEDGRLVAYENPPKGAKVINPEEILRESPLS.

A run of 3 helical transmembrane segments spans residues 10 to 32 (AVVIILTRFMEAIAIIISIYLAF), 37 to 59 (LRYVLATAGVFLLSVLINLTGLI), and 64 to 86 (FIYFSLASIFLSALILTALILYV).

The protein resides in the cell membrane. This is an uncharacterized protein from Aquifex aeolicus (strain VF5).